The primary structure comprises 281 residues: Leukocyte antigen CD37 (281 aa).

Residues 1-17 (MSAQESCLSLIKYFLFV) are Cytoplasmic-facing. A helical transmembrane segment spans residues 18-38 (FNLFFFVLGGLIFCFGTWILI). Residues 39–59 (DKTSFVSFVGLSFVPLQTWSK) lie on the Extracellular side of the membrane. Residues 60–74 (VLAVSGVLTMALALL) traverse the membrane as a helical segment. Over 75-85 (GCVGALKELRC) the chain is Cytoplasmic. A helical membrane pass occupies residues 86 to 111 (LLGLYFGMLLLLFATQITLGILISTQ). Topologically, residues 112 to 241 (RVRLERRVQE…QSLQKWLHNN (130 aa)) are extracellular. Asparagine 170, asparagine 183, and asparagine 188 each carry an N-linked (GlcNAc...) asparagine glycan. The helical transmembrane segment at 242 to 266 (IISIVGICLGVGLLELGFMTLSIFL) threads the bilayer. The Cytoplasmic portion of the chain corresponds to 267–281 (CRNLDHVYDRLARYR).

It belongs to the tetraspanin (TM4SF) family. Interacts with SCIMP. Interacts with SOCS3. Interacts with DECTIN1/CLEC7A. Tyrosine phosphorylated; leading to activation of downstream signaling pathways.

The protein resides in the cell membrane. Structural component of specialized membrane microdomains known as tetraspanin-enriched microdomains (TERMs), which act as platforms for receptor clustering and signaling. Participates thereby in diverse biological functions such as cell signal transduction, adhesion, migration and protein trafficking. Upon ligand binding, two signaling pathways are activated, one acting through phosphorylation by LYN leading to cell death or a survival pathway with activation of GSK3B. Plays an essential role for clustering of integrin ITGA4/ITGB1 and promotes its mobility in the plasma membrane of B-cells. In turn, participates in ITGA4/ITGB1 integrin-mediated antiapoptotic signaling through AKT. Also plays a role in the migration of dendritic cells and neutrophils to draining lymph nodes, as well as in their integrin-mediated adhesion. Negatively regulates IL-6 responses through direct interaction with SOCS3 thereby preventing constitutive IL-6 signaling. Alternatively, inhibition of IL-6 signaling can also occur via interaction and stabilization of DECTIN1/CLEC7A at the cell membrane to inhibit its ability to promote the production of IL-6. This Mus musculus (Mouse) protein is Leukocyte antigen CD37 (Cd37).